The following is a 180-amino-acid chain: ADP-ribosylation factor 4 (180 aa).

Gly-2 carries the N-myristoyl glycine lipid modification. GTP-binding positions include 24-31, 67-71, and 126-129; these read GLDAAGKT, DVGGQ, and NKQD. Ser-147 carries the post-translational modification Phosphoserine.

The protein belongs to the small GTPase superfamily. Arf family. Forms a complex containing RAB11A, ASAP1, RAB3IP, RAP11FIP3 and ARF4; the complex promotes preciliary trafficking; the complex binds to RHO in photoreceptor cells and promotes RHO ciliary transport.

It localises to the golgi apparatus. The protein localises to the membrane. In terms of biological role, GTP-binding protein that functions as an allosteric activator of the cholera toxin catalytic subunit, an ADP-ribosyltransferase. Involved in protein trafficking; may modulate vesicle budding and uncoating within the Golgi apparatus. Part of the ciliary targeting complex containing Rab11, ASAP1, Rabin8/RAB3IP, RAB11FIP3 and ARF4, which direct preciliary vesicle trafficking to mother centriole and ciliogenesis initiation. This is ADP-ribosylation factor 4 (Arf4) from Mus musculus (Mouse).